Reading from the N-terminus, the 779-residue chain is Endonuclease MutS2 (779 aa).

Residue 328–335 (GPNTGGKT) participates in ATP binding. The Smr domain maps to 704 to 779 (LDLRGKRYEE…GSGATIVTLG (76 aa)).

Belongs to the DNA mismatch repair MutS family. MutS2 subfamily. In terms of assembly, homodimer. Binds to stalled ribosomes, contacting rRNA.

Endonuclease that is involved in the suppression of homologous recombination and thus may have a key role in the control of bacterial genetic diversity. In terms of biological role, acts as a ribosome collision sensor, splitting the ribosome into its 2 subunits. Detects stalled/collided 70S ribosomes which it binds and splits by an ATP-hydrolysis driven conformational change. Acts upstream of the ribosome quality control system (RQC), a ribosome-associated complex that mediates the extraction of incompletely synthesized nascent chains from stalled ribosomes and their subsequent degradation. Probably generates substrates for RQC. This Streptococcus pyogenes serotype M49 (strain NZ131) protein is Endonuclease MutS2.